A 74-amino-acid polypeptide reads, in one-letter code: Protein kish-B (74 aa).

The signal sequence occupies residues 1–22; the sequence is MTNVYSFDGILVFGLLFICTCA. Residues 23–52 are Extracellular-facing; it reads YLKKVPRLNSWLLSEKKGVWGVFYKAAVIG. A helical transmembrane segment spans residues 53 to 73; the sequence is TRLHVVVAASCLCMAFYLIFL. Position 74 (Lys74) is a topological domain, cytoplasmic.

Belongs to the KISH family.

The protein localises to the golgi apparatus membrane. Involved in the early part of the secretory pathway. This chain is Protein kish-B (tmem167b), found in Danio rerio (Zebrafish).